The sequence spans 291 residues: Sesquiterpene cyclase astC (291 aa).

The protein belongs to the HAD-like hydrolase superfamily.

It carries out the reaction (2E,6E)-farnesyl diphosphate = (S,S)-drim-8-en-11-yl diphosphate. Its pathway is secondary metabolite biosynthesis; terpenoid biosynthesis. Sesquiterpene cyclase; part of the gene cluster that mediates the biosynthesis of astellolides, drimane-type sesquiterpene esters that show antimicrobial, anti-inflammatory, and anti-tumor activities. The first step in astellolide biosynthesis is performed by the sesquiterpene cyclase astC that catalyzes the formation of drimanyl pyrophosphate from farnesyl pyrophosphate. Drimanyl pyrophosphate is then dephosphorylated by the sesquiterpene phosphatase astI to produce drimanyl monophosphate which is further dephosphorylated to drim-8-ene-11-ol by atsK. Drim-8-ene-11-ol is converted to confertifolin, probably by the cytochrome P450 monooxygenase astD and/or the dehydrogenase astE. The cytochrome P450 monooxygenases astB, astF and astJ then hydroxylate confertifolin at C6, C14, or C15 to form trihydroxy confertifolin. The nonribosomal peptide synthetase astA catalyzes ester bond formation between trihydroxy contifolin and benzoic acid (BA) or 4-hydroxy benzoic acid (4HBA), leading to the formation of dideacetyl astellolides A and B, respectively. Finally, the O-acetyltransferase astG converts dideacetyl astellolides A and B into deacetyl astellolides A and B. The chain is Sesquiterpene cyclase astC from Aspergillus oryzae (strain ATCC 42149 / RIB 40) (Yellow koji mold).